The following is a 100-amino-acid chain: MIGLNHYLIVSGLLFCIGLAGMLKRKNILLLFFSTEIMLNAINIGFVAISKYTHNLDGQMFALFIISIAASEVAIGLGLVILWFKKFKSLDIDSLNAMKG.

The next 3 helical transmembrane spans lie at 1 to 21, 28 to 48, and 64 to 84; these read MIGL…GLAG, ILLL…GFVA, and FIIS…ILWF.

This sequence belongs to the complex I subunit 4L family. In terms of assembly, NDH-1 is composed of 14 different subunits. Subunits NuoA, H, J, K, L, M, N constitute the membrane sector of the complex.

The protein localises to the cell inner membrane. It catalyses the reaction a quinone + NADH + 5 H(+)(in) = a quinol + NAD(+) + 4 H(+)(out). NDH-1 shuttles electrons from NADH, via FMN and iron-sulfur (Fe-S) centers, to quinones in the respiratory chain. The immediate electron acceptor for the enzyme in this species is believed to be ubiquinone. Couples the redox reaction to proton translocation (for every two electrons transferred, four hydrogen ions are translocated across the cytoplasmic membrane), and thus conserves the redox energy in a proton gradient. The chain is NADH-quinone oxidoreductase subunit K from Helicobacter pylori (strain ATCC 700392 / 26695) (Campylobacter pylori).